We begin with the raw amino-acid sequence, 559 residues long: NAD-dependent histone deacetylase SIR2 (559 aa).

A disordered region spans residues 1–73 (MSESASMLQG…NDHSAQEVAG (73 aa)). Basic and acidic residues predominate over residues 39–51 (NDEKELLEATKAD). The segment covering 52 to 62 (ELDEVVDDYAE) has biased composition (acidic residues). The Deacetylase sirtuin-type domain maps to 223 to 514 (RLANFFTLDH…AFIAQKCGWD (292 aa)). Residues 248–267 (GAGI…KGFY) and 330–333 (QNID) contribute to the NAD(+) site. The Proton acceptor role is filled by His-350. Residues Cys-358, Cys-361, Cys-382, and Cys-385 each contribute to the Zn(2+) site. Residues 458–460 (GTS), 483–485 (NRD), and Cys-500 each bind NAD(+).

This sequence belongs to the sirtuin family. Class I subfamily. It depends on Zn(2+) as a cofactor.

Its subcellular location is the nucleus. It catalyses the reaction N(6)-acetyl-L-lysyl-[protein] + NAD(+) + H2O = 2''-O-acetyl-ADP-D-ribose + nicotinamide + L-lysyl-[protein]. Its function is as follows. NAD-dependent deacetylase. Heterochromatin component that silences transcription at silent mating loci, telomeres and the ribosomal DNA, and that also suppresses recombination in the rDNA and extends replicative life span. It acts as a NAD-dependent histone deacetylase, which deacetylates 'Lys-9' and 'Lys-14' of Histone H3 and 'Lys-16' of Histone H4. The sequence is that of NAD-dependent histone deacetylase SIR2 (SIR2) from Eremothecium gossypii (strain ATCC 10895 / CBS 109.51 / FGSC 9923 / NRRL Y-1056) (Yeast).